Consider the following 555-residue polypeptide: Formate--tetrahydrofolate ligase (555 aa).

65-72 is an ATP binding site; it reads TPAGEGKS.

It belongs to the formate--tetrahydrofolate ligase family.

It catalyses the reaction (6S)-5,6,7,8-tetrahydrofolate + formate + ATP = (6R)-10-formyltetrahydrofolate + ADP + phosphate. It participates in one-carbon metabolism; tetrahydrofolate interconversion. The protein is Formate--tetrahydrofolate ligase of Lactococcus lactis subsp. lactis (strain IL1403) (Streptococcus lactis).